A 67-amino-acid chain; its full sequence is Peptide Hp1239 (67 aa).

The first 23 residues, 1–23, serve as a signal peptide directing secretion; that stretch reads MKTQFTVLLITLVLFQMLSQSEA. Phenylalanine 36 bears the Phenylalanine amide mark. Positions 40 to 67 are excised as a propeptide; the sequence is GLSDLSDLDELFDGEITKADLDLLREIM.

This sequence belongs to the non-disulfide-bridged peptide (NDBP) superfamily. Short antimicrobial peptide (group 4) family. Expressed by the venom gland.

The protein resides in the secreted. The protein localises to the target cell membrane. Its function is as follows. Amphipathic peptide with antibacterial activities. Shows antiviral activities against the herpes simplex virus type-1. It potently inhibits the initial infection by provoking the rupture of viral envelop and the dissociation of proteins from the virions (EC(50) is 0.41 uM). It also effectively inhibits viral attachment (EC(50) is 5.73 uM), viral entry (EC(50) is 4.32 uM) and viral proliferation after infection (EC(50) is 8.41 uM). Morever, it enters mammalian tested cells (Vero) and reduces the intracellular infectivity. The chain is Peptide Hp1239 from Heterometrus petersii (Asian forest scorpion).